Here is a 462-residue protein sequence, read N- to C-terminus: Calcitonin gene-related peptide type 1 receptor (462 aa).

Positions 1–22 are cleaved as a signal peptide; the sequence is MEKKFFLSFLFLLPFFMILVIA. Over 23–140 the chain is Extracellular; it reads ESEEENPDDL…NTHEKVKTAL (118 aa). Cystine bridges form between Cys49–Cys75, Cys66–Cys106, and Cys89–Cys128. N-linked (GlcNAc...) asparagine glycosylation is found at Asn67, Asn119, and Asn124. The helical transmembrane segment at 141–165 threads the bilayer; that stretch reads NLFYLTIIGHVLSIASLLISLGIFF. The Cytoplasmic segment spans residues 166–176; it reads YFKSLSCQRIT. Residues 177–199 traverse the membrane as a helical segment; the sequence is LHKNLFFSFVCNSVITIIHLTAV. The Extracellular portion of the chain corresponds to 200–210; that stretch reads ANNQALVATNP. A helical transmembrane segment spans residues 211 to 239; that stretch reads VSCKVSQFIHLYLMGCNYFWMLCEGIYLH. Residues 240–253 are Cytoplasmic-facing; sequence TLVVVAVFAEKQHL. Residues 254-274 form a helical membrane-spanning segment; that stretch reads MWYYFLGWGFPLIPACIHAVA. The Extracellular segment spans residues 275–290; that stretch reads RRLYYNDNCWISSDTQ. Positions 289-290 are required for RAMP3 interaction; it reads TQ. The chain crosses the membrane as a helical span at residues 291-315; the sequence is LLYIIHGPICAALLVNLFFLLNIVR. Over 316-330 the chain is Cytoplasmic; that stretch reads VLITKLKVTHQAESN. The helical transmembrane segment at 331-352 threads the bilayer; that stretch reads LYMKAVRATLILVPLLGIEFVL. The Extracellular segment spans residues 353–367; sequence IPWRPEGKIAEEIYD. The chain crosses the membrane as a helical span at residues 368–388; the sequence is YIINILMHYQGLLVSTIFCFF. Residues 389-462 lie on the Cytoplasmic side of the membrane; sequence NGEVQAILRR…VVIKPEKLYD (74 aa). Ser421 and Ser446 each carry phosphoserine.

The protein belongs to the G-protein coupled receptor 2 family. Heterodimer of CALCRL and RAMP1; the receptor complex functions as CGRP receptor. Heterodimer of CALCRL and RAMP2 or CALCRL and RAMP3; the complexes function as adrenomedullin receptor.

The protein resides in the cell membrane. G protein-coupled receptor which specificity is determined by its interaction with receptor-activity-modifying proteins (RAMPs). Together with RAMP1, form the receptor complex for calcitonin-gene-related peptides CALCA/CGRP1 and CALCB/CGRP2. Together with RAMP2 or RAMP3, function as receptor complexes for adrenomedullin (ADM and ADM2). Ligand binding causes a conformation change that triggers signaling via guanine nucleotide-binding proteins (G proteins) and modulates the activity of downstream effectors. Activates cAMP-dependent pathway. This chain is Calcitonin gene-related peptide type 1 receptor (CALCRL), found in Bos taurus (Bovine).